The sequence spans 216 residues: Major fimbrial subunit (216 aa).

An N-terminal signal peptide occupies residues 1–20 (MKKTLLGSLILLAFAGNVQA). C41 and C81 are joined by a disulfide.

Belongs to the fimbrial protein family.

The protein resides in the fimbrium. Mediates adherence to oropharyngeal epithelial cells. Helps the airway colonization process. The sequence is that of Major fimbrial subunit (hifA) from Haemophilus influenzae.